Here is a 444-residue protein sequence, read N- to C-terminus: Phosphoribosylamine--glycine ligase (444 aa).

The ATP-grasp domain maps to 109 to 324 (RNLFKKYEID…FLDVCFAIAE (216 aa)). 140 to 202 (MTSLGKDVVV…EEKLVGVEFT (63 aa)) serves as a coordination point for ATP. Mg(2+) is bound by residues Gln-282, Glu-294, and Asn-296. Residues Gln-282, Glu-294, and Asn-296 each contribute to the Mn(2+) site.

This sequence belongs to the GARS family. The cofactor is Mg(2+). Mn(2+) is required as a cofactor.

It carries out the reaction 5-phospho-beta-D-ribosylamine + glycine + ATP = N(1)-(5-phospho-beta-D-ribosyl)glycinamide + ADP + phosphate + H(+). Its pathway is purine metabolism; IMP biosynthesis via de novo pathway; N(1)-(5-phospho-D-ribosyl)glycinamide from 5-phospho-alpha-D-ribose 1-diphosphate: step 2/2. The protein is Phosphoribosylamine--glycine ligase of Methanococcus maripaludis (strain DSM 14266 / JCM 13030 / NBRC 101832 / S2 / LL).